A 167-amino-acid polypeptide reads, in one-letter code: Osteocalcin 2a (167 aa).

An N-terminal signal peptide occupies residues 1–18 (MKSLTLLTICAVLSVSLS). Residues 19–118 (MNDLALDVVL…LASVLLRRKR (100 aa)) constitute a propeptide that is removed on maturation. Positions 28–99 (LDPAPDPATE…TTEDPAAATE (72 aa)) are disordered. The segment covering 38–87 (PAPAADSSASSSASSSSSSASDSSASASDSSDSDSSSASSSSSSSESASA) has biased composition (low complexity). One can recognise a Gla domain in the interval 131 to 163 (QVESLSEVCELNLACEHMAETAGIVAAYTAYYG). Glutamate 133, glutamate 137, and glutamate 140 together coordinate Ca(2+). Residues glutamate 133, glutamate 137, and glutamate 140 each carry the 4-carboxyglutamate modification. The cysteines at positions 139 and 145 are disulfide-linked.

This sequence belongs to the osteocalcin/matrix Gla protein family. Gamma-carboxyglutamate residues are formed by vitamin K dependent carboxylation. These residues are essential for the binding of calcium.

The protein resides in the secreted. In terms of biological role, binds strongly to apatite and calcium. This chain is Osteocalcin 2a, found in Oncorhynchus mykiss (Rainbow trout).